A 258-amino-acid polypeptide reads, in one-letter code: Acyl-[acyl-carrier-protein]--UDP-N-acetylglucosamine O-acyltransferase (258 aa).

This sequence belongs to the transferase hexapeptide repeat family. LpxA subfamily. In terms of assembly, homotrimer.

It is found in the cytoplasm. The catalysed reaction is a (3R)-hydroxyacyl-[ACP] + UDP-N-acetyl-alpha-D-glucosamine = a UDP-3-O-[(3R)-3-hydroxyacyl]-N-acetyl-alpha-D-glucosamine + holo-[ACP]. The protein operates within glycolipid biosynthesis; lipid IV(A) biosynthesis; lipid IV(A) from (3R)-3-hydroxytetradecanoyl-[acyl-carrier-protein] and UDP-N-acetyl-alpha-D-glucosamine: step 1/6. Involved in the biosynthesis of lipid A, a phosphorylated glycolipid that anchors the lipopolysaccharide to the outer membrane of the cell. This Myxococcus xanthus (strain DK1622) protein is Acyl-[acyl-carrier-protein]--UDP-N-acetylglucosamine O-acyltransferase.